Reading from the N-terminus, the 203-residue chain is Nascent polypeptide-associated complex subunit alpha (203 aa).

Residues 1-19 (MADPRIEELPDEEVPKTNV) show a composition bias toward basic and acidic residues. A disordered region spans residues 1-45 (MADPRIEELPDEEVPKTNVEDAADSSESEAGEEPTIPGGAAVTIH). Over residues 21 to 32 (DAADSSESEAGE) the composition is skewed to acidic residues. Residues 46 to 111 (SRNEKKARKA…AKIEDLNSQA (66 aa)) form the NAC-A/B domain. Residues 118 to 167 (QLAAAEAAGEHAGHDHDHDKGKGKAPETEAKKEEEEDDGEEVDETGLEPK) form a disordered region. Basic and acidic residues predominate over residues 125–150 (AGEHAGHDHDHDKGKGKAPETEAKKE). Residues 151–163 (EEEDDGEEVDETG) are compositionally biased toward acidic residues. The 40-residue stretch at 164–203 (LEPKDIDLVMAQANVSRKKAVKALRENDNDIVNSIMALSI) folds into the UBA domain.

It belongs to the NAC-alpha family. Part of the nascent polypeptide-associated complex (NAC), consisting of egd2 and egd1. NAC associates with ribosomes via egd1.

The protein resides in the cytoplasm. It localises to the nucleus. Functionally, component of the nascent polypeptide-associated complex (NAC), a dynamic component of the ribosomal exit tunnel, protecting the emerging polypeptides from interaction with other cytoplasmic proteins to ensure appropriate nascent protein targeting. The NAC complex also promotes mitochondrial protein import by enhancing productive ribosome interactions with the outer mitochondrial membrane and blocks the inappropriate interaction of ribosomes translating non-secretory nascent polypeptides with translocation sites in the membrane of the endoplasmic reticulum. Egd2 may also be involved in transcription regulation. In Emericella nidulans (strain FGSC A4 / ATCC 38163 / CBS 112.46 / NRRL 194 / M139) (Aspergillus nidulans), this protein is Nascent polypeptide-associated complex subunit alpha (egd2).